We begin with the raw amino-acid sequence, 455 residues long: Transmembrane protease serine 5 (455 aa).

The Cytoplasmic portion of the chain corresponds to 1–49 (MSPTLDDQSPMEIRCTEEGAGPGIFRMELGDQRQSISQSQRWCCLQRGC). A helical; Signal-anchor for type II membrane protein transmembrane segment spans residues 50–70 (VILGVLGLLAGAGIASWLLVL). The Extracellular portion of the chain corresponds to 71 to 455 (YLWPAASPSI…DWIHDTVQVR (385 aa)). The SRCR domain occupies 112 to 207 (FRINGEDLLL…SGRIVSLKCS (96 aa)). 7 disulfide bridges follow: C135–C196, C148–C206, C209–C328, C243–C259, C342–C411, C374–C390, and C401–C429. N-linked (GlcNAc...) asparagine glycans are attached at residues N163 and N170. Residues 218–453 (IVGGQAVASG…FLDWIHDTVQ (236 aa)) enclose the Peptidase S1 domain. Active-site charge relay system residues include H258 and D308. 2 N-linked (GlcNAc...) asparagine glycosylation sites follow: N319 and N375. The active-site Charge relay system is the S405.

This sequence belongs to the peptidase S1 family.

Its subcellular location is the cell membrane. May play a role in hearing. The polypeptide is Transmembrane protease serine 5 (Tmprss5) (Mus musculus (Mouse)).